A 175-amino-acid polypeptide reads, in one-letter code: E1B protein, small T-antigen (175 aa).

The segment at 153–175 (LAEEDEDEEGTTLTTEAEQESSA) is disordered.

The protein belongs to the adenoviridae E1B 19 kDa protein family.

The protein is E1B protein, small T-antigen of Mus musculus (Mouse).